The sequence spans 129 residues: Glycine cleavage system H protein (129 aa).

A Lipoyl-binding domain is found at 24–106; that stretch reads SYTVGITEHA…FGDGWFFRVM (83 aa). Residue lysine 65 is modified to N6-lipoyllysine.

It belongs to the GcvH family. The glycine cleavage system is composed of four proteins: P, T, L and H. It depends on (R)-lipoate as a cofactor.

The glycine cleavage system catalyzes the degradation of glycine. The H protein shuttles the methylamine group of glycine from the P protein to the T protein. The sequence is that of Glycine cleavage system H protein from Shewanella frigidimarina (strain NCIMB 400).